The chain runs to 30 residues: Trypsin inhibitor 2 (30 aa).

3 disulfide bridges follow: Cys-3-Cys-20, Cys-10-Cys-22, and Cys-16-Cys-29.

Belongs to the protease inhibitor I7 (squash-type serine protease inhibitor) family.

The protein resides in the secreted. Its function is as follows. Inhibits trypsin. The polypeptide is Trypsin inhibitor 2 (Luffa aegyptiaca (Sponge gourd)).